Here is a 123-residue protein sequence, read N- to C-terminus: UPF0231 protein plu3616 (123 aa).

The protein belongs to the UPF0231 family.

The protein is UPF0231 protein plu3616 of Photorhabdus laumondii subsp. laumondii (strain DSM 15139 / CIP 105565 / TT01) (Photorhabdus luminescens subsp. laumondii).